The chain runs to 330 residues: 2-phospho-L-lactate transferase (330 aa).

Residue D49 coordinates 7,8-didemethyl-8-hydroxy-5-deazariboflavin.

The protein belongs to the CofD family. In terms of assembly, homodimer. Requires Mg(2+) as cofactor.

The catalysed reaction is (2S)-lactyl-2-diphospho-5'-guanosine + 7,8-didemethyl-8-hydroxy-5-deazariboflavin = oxidized coenzyme F420-0 + GMP + H(+). It functions in the pathway cofactor biosynthesis; coenzyme F420 biosynthesis. Its function is as follows. Catalyzes the transfer of the 2-phospholactate moiety from (2S)-lactyl-2-diphospho-5'-guanosine to 7,8-didemethyl-8-hydroxy-5-deazariboflavin (FO) with the formation of oxidized coenzyme F420-0 and GMP. In Haloarcula marismortui (strain ATCC 43049 / DSM 3752 / JCM 8966 / VKM B-1809) (Halobacterium marismortui), this protein is 2-phospho-L-lactate transferase.